The primary structure comprises 134 residues: Small ribosomal subunit protein uS11 (134 aa).

It belongs to the universal ribosomal protein uS11 family. Part of the 30S ribosomal subunit. Interacts with proteins S7 and S18. Binds to IF-3.

Located on the platform of the 30S subunit, it bridges several disparate RNA helices of the 16S rRNA. Forms part of the Shine-Dalgarno cleft in the 70S ribosome. This is Small ribosomal subunit protein uS11 from Frankia casuarinae (strain DSM 45818 / CECT 9043 / HFP020203 / CcI3).